The following is a 147-amino-acid chain: uncharacterized protein (147 aa).

Transmembrane regions (helical) follow at residues 4–26 (YLRVVLPLSLALNSYGVLAFFWG) and 123–145 (YALCVGFFVVLLQLLWGSARAYF).

The protein localises to the cell membrane. This is an uncharacterized protein from Treponema pallidum (strain Nichols).